Consider the following 176-residue polypeptide: ATP synthase subunit b (176 aa).

The chain crosses the membrane as a helical span at residues 7–27; it reads IQIPDGSAIFVLLTFILLMFI. Residues 75 to 94 form a disordered region; sequence SQSQATALMENARKSSEEQS. Basic and acidic residues predominate over residues 85–94; the sequence is NARKSSEEQS.

Belongs to the ATPase B chain family. In terms of assembly, F-type ATPases have 2 components, F(1) - the catalytic core - and F(0) - the membrane proton channel. F(1) has five subunits: alpha(3), beta(3), gamma(1), delta(1), epsilon(1). F(0) has three main subunits: a(1), b(2) and c(10-14). The alpha and beta chains form an alternating ring which encloses part of the gamma chain. F(1) is attached to F(0) by a central stalk formed by the gamma and epsilon chains, while a peripheral stalk is formed by the delta and b chains.

Its subcellular location is the cell membrane. Its function is as follows. F(1)F(0) ATP synthase produces ATP from ADP in the presence of a proton or sodium gradient. F-type ATPases consist of two structural domains, F(1) containing the extramembraneous catalytic core and F(0) containing the membrane proton channel, linked together by a central stalk and a peripheral stalk. During catalysis, ATP synthesis in the catalytic domain of F(1) is coupled via a rotary mechanism of the central stalk subunits to proton translocation. Functionally, component of the F(0) channel, it forms part of the peripheral stalk, linking F(1) to F(0). The polypeptide is ATP synthase subunit b (Oenococcus oeni (strain ATCC BAA-331 / PSU-1)).